A 503-amino-acid chain; its full sequence is Glycerol kinase (503 aa).

Thr-14 is an ADP binding site. ATP contacts are provided by Thr-14, Thr-15, and Ser-16. Thr-14 lines the sn-glycerol 3-phosphate pocket. Arg-18 provides a ligand contact to ADP. Sn-glycerol 3-phosphate-binding residues include Arg-84, Glu-85, Tyr-136, and Asp-246. Glycerol is bound by residues Arg-84, Glu-85, Tyr-136, Asp-246, and Gln-247. 2 residues coordinate ADP: Thr-268 and Gly-311. 4 residues coordinate ATP: Thr-268, Gly-311, Gln-315, and Gly-412. The ADP site is built by Gly-412 and Asn-416.

Belongs to the FGGY kinase family.

It catalyses the reaction glycerol + ATP = sn-glycerol 3-phosphate + ADP + H(+). It functions in the pathway polyol metabolism; glycerol degradation via glycerol kinase pathway; sn-glycerol 3-phosphate from glycerol: step 1/1. With respect to regulation, inhibited by fructose 1,6-bisphosphate (FBP). Functionally, key enzyme in the regulation of glycerol uptake and metabolism. Catalyzes the phosphorylation of glycerol to yield sn-glycerol 3-phosphate. The polypeptide is Glycerol kinase (Haemophilus influenzae (strain PittEE)).